We begin with the raw amino-acid sequence, 145 residues long: MKASVVLSLIGYLVVPSDTAVLGRCVVAKKLHEGGLSDFEGYSLENWVCLAYFESKFNPMAVYENSRSDFIGYGLFQIRNHDWCDHGRNRCHMSCSALLNPDLKKTIECAKTIVKGKRGMGAWPSWTLNCQHSDTLARWLDGCKL.

An N-terminal signal peptide occupies residues 1–19 (MKASVVLSLIGYLVVPSDT). The C-type lysozyme domain occupies 20–145 (AVLGRCVVAK…LARWLDGCKL (126 aa)). Cystine bridges form between cysteine 25–cysteine 143, cysteine 49–cysteine 130, cysteine 84–cysteine 95, and cysteine 91–cysteine 109. Residue glutamate 54 is part of the active site.

It belongs to the glycosyl hydrolase 22 family. As to quaternary structure, monomer.

The protein resides in the secreted. The protein localises to the cytoplasmic vesicle. It is found in the secretory vesicle. Its subcellular location is the acrosome. It localises to the cell projection. The protein resides in the cilium. The protein localises to the flagellum. In terms of biological role, may be involved in fertilization. Has no detectable bacteriolytic and lysozyme activities in vitro. The protein is Lysozyme-like protein 4 (LYZL4) of Bos taurus (Bovine).